Consider the following 553-residue polypeptide: Formate--tetrahydrofolate ligase (553 aa).

An ATP-binding site is contributed by T63–S70.

This sequence belongs to the formate--tetrahydrofolate ligase family.

The enzyme catalyses (6S)-5,6,7,8-tetrahydrofolate + formate + ATP = (6R)-10-formyltetrahydrofolate + ADP + phosphate. The protein operates within one-carbon metabolism; tetrahydrofolate interconversion. The protein is Formate--tetrahydrofolate ligase of Limosilactobacillus fermentum (strain NBRC 3956 / LMG 18251) (Lactobacillus fermentum).